Consider the following 467-residue polypeptide: MTAIRRRIMGLETEYGIANMQDSSRRLGPDEIARKLFAPVVEKHRSSNIYTENASRLYLDVGAHPEFATAECDSLHQLIAYDRSGDLMFHELADRAEQAVGGKVYLLKNNTDSLGNSYGCHENYLVSRDIPLKGLSKQLLPFLVTRQLICGAGKLAIPYPGAPNENFGPGYTMSQRADHVWEGVSSATTRSRPIINTRDEPHADSSKYRRLHVIVGDSNMSEVTTALKVGSTLLVLEMIEAGVALPDFEMANEIRSIREISRDFTGQVDIALRSGSTATPLEIQRAFYDAACAYLASREDPERGTPNAELTPVVDLWGRVLDCFDTGDFSPVSTEIDWVIKKSLLDRMAAARGLDPIDPRLAQIDLMYHDIHPTRGLFNVLARRGLARTLLAPETIEQAVRQAPPTTRAAVRGRFIAAVRANPELSYTVDWMRVKVNGEGGAEALLADPFANTSEDVDRIIESLESR.

Residue E12 participates in Mg(2+) binding. R56 is an ATP binding site. Y58 is a Mg(2+) binding site. Residue D60 is the Proton acceptor of the active site. E66 contributes to the Mg(2+) binding site. Residues T69 and W431 each coordinate ATP.

The protein belongs to the Pup ligase/Pup deamidase family. Pup-conjugating enzyme subfamily.

The catalysed reaction is ATP + [prokaryotic ubiquitin-like protein]-L-glutamate + [protein]-L-lysine = ADP + phosphate + N(6)-([prokaryotic ubiquitin-like protein]-gamma-L-glutamyl)-[protein]-L-lysine.. The protein operates within protein degradation; proteasomal Pup-dependent pathway. It participates in protein modification; protein pupylation. In terms of biological role, catalyzes the covalent attachment of the prokaryotic ubiquitin-like protein modifier Pup to the proteasomal substrate proteins, thereby targeting them for proteasomal degradation. This tagging system is termed pupylation. The ligation reaction involves the side-chain carboxylate of the C-terminal glutamate of Pup and the side-chain amino group of a substrate lysine. The sequence is that of Pup--protein ligase from Corynebacterium jeikeium (strain K411).